The sequence spans 254 residues: Putative hydro-lyase SACE_1553 (254 aa).

Belongs to the D-glutamate cyclase family.

The polypeptide is Putative hydro-lyase SACE_1553 (Saccharopolyspora erythraea (strain ATCC 11635 / DSM 40517 / JCM 4748 / NBRC 13426 / NCIMB 8594 / NRRL 2338)).